A 110-amino-acid polypeptide reads, in one-letter code: Large ribosomal subunit protein uL22 (110 aa).

The protein belongs to the universal ribosomal protein uL22 family. In terms of assembly, part of the 50S ribosomal subunit.

This protein binds specifically to 23S rRNA; its binding is stimulated by other ribosomal proteins, e.g. L4, L17, and L20. It is important during the early stages of 50S assembly. It makes multiple contacts with different domains of the 23S rRNA in the assembled 50S subunit and ribosome. Functionally, the globular domain of the protein is located near the polypeptide exit tunnel on the outside of the subunit, while an extended beta-hairpin is found that lines the wall of the exit tunnel in the center of the 70S ribosome. The sequence is that of Large ribosomal subunit protein uL22 from Shewanella halifaxensis (strain HAW-EB4).